Consider the following 247-residue polypeptide: 6-carboxyhexanoate--CoA ligase (247 aa).

The protein belongs to the BioW family. As to quaternary structure, homodimer. The cofactor is Mg(2+).

It catalyses the reaction heptanedioate + ATP + CoA = 6-carboxyhexanoyl-CoA + AMP + diphosphate. The protein operates within metabolic intermediate metabolism; pimeloyl-CoA biosynthesis; pimeloyl-CoA from pimelate: step 1/1. Its function is as follows. Catalyzes the transformation of pimelate into pimeloyl-CoA with concomitant hydrolysis of ATP to AMP. In Corynebacterium diphtheriae (strain ATCC 700971 / NCTC 13129 / Biotype gravis), this protein is 6-carboxyhexanoate--CoA ligase.